A 149-amino-acid polypeptide reads, in one-letter code: Oligosaccharyltransferase complex subunit ostc (149 aa).

At 1–32 the chain is on the cytoplasmic side; the sequence is MESLYRVPFTVLECPNLKLKKPSWLHMPSAMT. A helical membrane pass occupies residues 33–53; that stretch reads VYAMVVVSYFLITGGIIYDVI. The Extracellular portion of the chain corresponds to 54 to 83; that stretch reads VEPPSVGSMTDEHGHQRPVAFLAYRVNGQY. The helical transmembrane segment at 84-104 threads the bilayer; the sequence is IMEGLASSFLFTMGGLGFIIL. Residues 105–117 are Cytoplasmic-facing; it reads DRSNAPNIPKLNR. Residues 118–138 form a helical membrane-spanning segment; that stretch reads FLLLFIGFVCVLLSFFMARVF. The Extracellular segment spans residues 139-149; it reads MRMKLPGYLMG.

This sequence belongs to the OSTC family. As to quaternary structure, specific component of the STT3A-containing form of the oligosaccharyltransferase (OST) complex.

The protein localises to the membrane. It functions in the pathway protein modification; protein glycosylation. In terms of biological role, specific component of the STT3A-containing form of the oligosaccharyl transferase (OST) complex that catalyzes the initial transfer of a defined glycan (Glc(3)Man(9)GlcNAc(2) in eukaryotes) from the lipid carrier dolichol-pyrophosphate to an asparagine residue within an Asn-X-Ser/Thr consensus motif in nascent polypeptide chains, the first step in protein N-glycosylation. N-glycosylation occurs cotranslationally and the complex associates with the Sec61 complex at the channel-forming translocon complex that mediates protein translocation across the endoplasmic reticulum (ER). All subunits are required for a maximal enzyme activity. The sequence is that of Oligosaccharyltransferase complex subunit ostc from Xenopus tropicalis (Western clawed frog).